Consider the following 140-residue polypeptide: Translation initiation factor 2 subunit beta (140 aa).

This sequence belongs to the eIF-2-beta/eIF-5 family. Heterotrimer composed of an alpha, a beta and a gamma chain.

Its function is as follows. eIF-2 functions in the early steps of protein synthesis by forming a ternary complex with GTP and initiator tRNA. This is Translation initiation factor 2 subunit beta from Metallosphaera sedula (strain ATCC 51363 / DSM 5348 / JCM 9185 / NBRC 15509 / TH2).